The chain runs to 512 residues: Cytochrome P450 76C1 (512 aa).

The chain crosses the membrane as a helical span at residues 3–23; sequence IISGQALLLLFCFILSCFLIF. Residue Cys450 participates in heme binding.

Belongs to the cytochrome P450 family. Heme is required as a cofactor.

It localises to the membrane. The sequence is that of Cytochrome P450 76C1 (CYP76C1) from Arabidopsis thaliana (Mouse-ear cress).